Consider the following 171-residue polypeptide: Adenine phosphoribosyltransferase (171 aa).

Belongs to the purine/pyrimidine phosphoribosyltransferase family. Homodimer.

It localises to the cytoplasm. The enzyme catalyses AMP + diphosphate = 5-phospho-alpha-D-ribose 1-diphosphate + adenine. It functions in the pathway purine metabolism; AMP biosynthesis via salvage pathway; AMP from adenine: step 1/1. Its function is as follows. Catalyzes a salvage reaction resulting in the formation of AMP, that is energically less costly than de novo synthesis. The chain is Adenine phosphoribosyltransferase from Geotalea uraniireducens (strain Rf4) (Geobacter uraniireducens).